Here is a 99-residue protein sequence, read N- to C-terminus: Integration host factor subunit alpha (99 aa).

Belongs to the bacterial histone-like protein family. In terms of assembly, heterodimer of an alpha and a beta chain.

Functionally, this protein is one of the two subunits of integration host factor, a specific DNA-binding protein that functions in genetic recombination as well as in transcriptional and translational control. The sequence is that of Integration host factor subunit alpha from Stenotrophomonas maltophilia (strain R551-3).